A 309-amino-acid polypeptide reads, in one-letter code: MSAKIIRIATRQSPLALWQANHVREMLVKQWPNLSIELLPMITSGDRFLKDKLLSAGGKGLFVKELEEALLDKRADLAVHSTKDMPAQLPDGLSLAAICKRDNPFDALISPQFKSLDALPKNAIIGTSSLRRQSQLLAYNPNLQVKTLRGNIHTRLSKLESGEYQAIILAAAGLERMGLAHHITQLIPDDIMLPTCAQGALCIECRTDDLEIQELIYGLNDPISALCVHTERRVNAKLGGNCHIPFAVYCTITAENLLLLRAKVLNLDGSQMIDDEQQGKIEEAEIIADRCTESLMTKGAMTLLSTIPS.

C242 is subject to S-(dipyrrolylmethanemethyl)cysteine.

The protein belongs to the HMBS family. As to quaternary structure, monomer. It depends on dipyrromethane as a cofactor.

The catalysed reaction is 4 porphobilinogen + H2O = hydroxymethylbilane + 4 NH4(+). It functions in the pathway porphyrin-containing compound metabolism; protoporphyrin-IX biosynthesis; coproporphyrinogen-III from 5-aminolevulinate: step 2/4. Its function is as follows. Tetrapolymerization of the monopyrrole PBG into the hydroxymethylbilane pre-uroporphyrinogen in several discrete steps. This chain is Porphobilinogen deaminase, found in Legionella pneumophila (strain Lens).